The sequence spans 146 residues: Mediator of RNA polymerase II transcription subunit 10 (146 aa).

The protein belongs to the Mediator complex subunit 10 family. As to quaternary structure, component of the Mediator complex.

It is found in the nucleus. Component of the Mediator complex, a coactivator involved in the regulated transcription of nearly all RNA polymerase II-dependent genes. Mediator functions as a bridge to convey information from gene-specific regulatory proteins to the basal RNA polymerase II transcription machinery. Mediator is recruited to promoters by direct interactions with regulatory proteins and serves as a scaffold for the assembly of a functional preinitiation complex with RNA polymerase II and the general transcription factors. In Scheffersomyces stipitis (strain ATCC 58785 / CBS 6054 / NBRC 10063 / NRRL Y-11545) (Yeast), this protein is Mediator of RNA polymerase II transcription subunit 10 (NUT2).